We begin with the raw amino-acid sequence, 610 residues long: Elongation factor 4 (610 aa).

Residues 11–193 (EKIRNFSIIA…QIVEKVPAPT (183 aa)) enclose the tr-type G domain. GTP is bound by residues 23 to 28 (DHGKST) and 140 to 143 (NKID).

Belongs to the TRAFAC class translation factor GTPase superfamily. Classic translation factor GTPase family. LepA subfamily.

The protein resides in the cell membrane. It catalyses the reaction GTP + H2O = GDP + phosphate + H(+). Its function is as follows. Required for accurate and efficient protein synthesis under certain stress conditions. May act as a fidelity factor of the translation reaction, by catalyzing a one-codon backward translocation of tRNAs on improperly translocated ribosomes. Back-translocation proceeds from a post-translocation (POST) complex to a pre-translocation (PRE) complex, thus giving elongation factor G a second chance to translocate the tRNAs correctly. Binds to ribosomes in a GTP-dependent manner. The sequence is that of Elongation factor 4 from Streptococcus pyogenes serotype M49 (strain NZ131).